The sequence spans 342 residues: Platelet-activating factor receptor (342 aa).

At 1 to 16 (MEPNNSFRVDSEFRYT) the chain is on the extracellular side. N4 carries an N-linked (GlcNAc...) asparagine glycan. The chain crosses the membrane as a helical span at residues 17–38 (LFPIFYSIVFVLGVIANSYVLW). At 39–54 (VFARLYPSKKFNEIKI) the chain is on the cytoplasmic side. A helical transmembrane segment spans residues 55 to 74 (FMVNLTMADLLFLVTLPLWI). Residues 75–91 (VYYYNQGDWILPKFLCN) are Extracellular-facing. The cysteines at positions 90 and 173 are disulfide-linked. The helical transmembrane segment at 92-113 (LAGCFFFINTYCSVAFLAVITY) threads the bilayer. At 114 to 133 (NRFQAVTRPIKTAQATTRKR) the chain is on the cytoplasmic side. Residues 134-155 (GFLLSLIIWVSIVGAASYFFVL) form a helical membrane-spanning segment. The Extracellular portion of the chain corresponds to 156 to 184 (DSTNSEPKKTGSGNITRCFEHYEKGSIPV). The N-linked (GlcNAc...) asparagine glycan is linked to N169. The helical transmembrane segment at 185–205 (LIIHIFLVFSFFLVFLIILFC) threads the bilayer. The Cytoplasmic segment spans residues 206-233 (NLVIIRTLLTQQVQMQRNAEVKRRALWM). The helical transmembrane segment at 234–254 (VCTVLAVFVICFVPHHLVQLP) threads the bilayer. The Extracellular portion of the chain corresponds to 255 to 276 (WTLAELGFQDTDFHQGINDAHQ). The helical transmembrane segment at 277 to 296 (VTLCLLSTNCVLDPIIYCFL) threads the bilayer. At 297–342 (TKKFRKHLTEKLYSMRESRKCSRATSETGTEVVVQLKDAPIKSLKY) the chain is on the cytoplasmic side.

The protein belongs to the G-protein coupled receptor 1 family. In terms of assembly, interacts with ARRB1.

The protein localises to the cell membrane. Its function is as follows. Receptor for platelet activating factor, a chemotactic phospholipid mediator that possesses potent inflammatory, smooth-muscle contractile and hypotensive activity. Seems to mediate its action via a G protein that activates a phosphatidylinositol-calcium second messenger system. This is Platelet-activating factor receptor from Capra hircus (Goat).